A 566-amino-acid polypeptide reads, in one-letter code: Chaperonin GroEL 1 (566 aa).

ATP-binding positions include 29-32, 86-90, G413, and D492; these read TIGP and DGTTT. Positions 520–540 are disordered; sequence DKPEPPAPAGDGGGDPMGGMG. The segment covering 529–540 has biased composition (gly residues); the sequence is GDGGGDPMGGMG.

The protein belongs to the chaperonin (HSP60) family. As to quaternary structure, forms a cylinder of 14 subunits composed of two heptameric rings stacked back-to-back. Interacts with the co-chaperonin GroES.

The protein localises to the cytoplasm. The enzyme catalyses ATP + H2O + a folded polypeptide = ADP + phosphate + an unfolded polypeptide.. Together with its co-chaperonin GroES, plays an essential role in assisting protein folding. The GroEL-GroES system forms a nano-cage that allows encapsulation of the non-native substrate proteins and provides a physical environment optimized to promote and accelerate protein folding. The protein is Chaperonin GroEL 1 of Prochlorococcus marinus (strain MIT 9313).